We begin with the raw amino-acid sequence, 133 residues long: Large ribosomal subunit protein uL15 (133 aa).

A disordered region spans residues 1 to 58; the sequence is MALQNLTPAPGSTHATKRLGRGQGSGNGKTAGKGNKGQRARKGYNEKRGFEGGQQPLQ. Over residues 21-35 the composition is skewed to gly residues; it reads RGQGSGNGKTAGKGN.

The protein belongs to the universal ribosomal protein uL15 family. Part of the 50S ribosomal subunit.

In terms of biological role, binds to the 23S rRNA. In Campylobacter curvus (strain 525.92), this protein is Large ribosomal subunit protein uL15.